The primary structure comprises 105 residues: Guanidinium exporter (105 aa).

Residues 1-21 (MSWIILLIAGLLEVVWAVGLK) traverse the membrane as a helical segment. The Cytoplasmic segment spans residues 22-28 (YTHGFSR). A helical transmembrane segment spans residues 29 to 49 (LTPSIITITAMVISMALLSWA). Residues 50 to 57 (MKTLPVGT) are Periplasmic-facing. A helical membrane pass occupies residues 58–78 (AYAIWTGIGAVGAAITGILLL). The Cytoplasmic segment spans residues 79–81 (GES). The chain crosses the membrane as a helical span at residues 82 to 102 (ASPARLLSLGLIVAGIIGLKL). Topologically, residues 103 to 105 (SAH) are periplasmic.

Belongs to the drug/metabolite transporter (DMT) superfamily. Small multidrug resistance (SMR) (TC 2.A.7.1) family. Gdx/SugE subfamily.

The protein localises to the cell inner membrane. Its function is as follows. Guanidinium ion exporter. Couples guanidinium export to the proton motive force, exchanging one guanidinium ion for two protons. The sequence is that of Guanidinium exporter from Salmonella typhi.